Reading from the N-terminus, the 412-residue chain is Protein png-1 (412 aa).

Zn(2+) is bound by residues C150, C153, C182, and C185. The interval 363–412 (AAAARGGRSSPDNKSGANMMGSPATGDIKRPIPEDAPVPDVPSLWPTYGP) is disordered.

The protein belongs to the transglutaminase-like superfamily. PNGase family.

This is Protein png-1 (un-7) from Neurospora crassa (strain ATCC 24698 / 74-OR23-1A / CBS 708.71 / DSM 1257 / FGSC 987).